The sequence spans 156 residues: ATP synthase subunit b (156 aa).

Residues 5–27 (ITLIGQMITFAIFVGFTMKFVWP) traverse the membrane as a helical segment.

The protein belongs to the ATPase B chain family. F-type ATPases have 2 components, F(1) - the catalytic core - and F(0) - the membrane proton channel. F(1) has five subunits: alpha(3), beta(3), gamma(1), delta(1), epsilon(1). F(0) has three main subunits: a(1), b(2) and c(10-14). The alpha and beta chains form an alternating ring which encloses part of the gamma chain. F(1) is attached to F(0) by a central stalk formed by the gamma and epsilon chains, while a peripheral stalk is formed by the delta and b chains.

It is found in the cell inner membrane. Its function is as follows. F(1)F(0) ATP synthase produces ATP from ADP in the presence of a proton or sodium gradient. F-type ATPases consist of two structural domains, F(1) containing the extramembraneous catalytic core and F(0) containing the membrane proton channel, linked together by a central stalk and a peripheral stalk. During catalysis, ATP synthesis in the catalytic domain of F(1) is coupled via a rotary mechanism of the central stalk subunits to proton translocation. Component of the F(0) channel, it forms part of the peripheral stalk, linking F(1) to F(0). The polypeptide is ATP synthase subunit b (Francisella tularensis subsp. tularensis (strain SCHU S4 / Schu 4)).